A 531-amino-acid chain; its full sequence is Protein SHORT-ROOT (531 aa).

Positions 14–39 (QQSDSIITNQSSLSRTSTTTTGSPQT) are enriched in low complexity. Disordered stretches follow at residues 14 to 40 (QQSDSIITNQSSLSRTSTTTTGSPQTA) and 65 to 103 (SSSSSHHNHHNHNNPNTYYSPFTTPTQYHPATSSTPSST). Over residues 81–93 (TYYSPFTTPTQYH) the composition is skewed to polar residues. The segment covering 94–103 (PATSSTPSST) has biased composition (low complexity). The region spanning 134 to 529 (FDFSANAKWA…QPVVWASAWR (396 aa)) is the GRAS domain. Positions 141–206 (KWADSVLLEA…GSGERCYRTM (66 aa)) are leucine repeat I (LRI). A VHIID region spans residues 225-290 (VLKFQEVSPW…DDTPHLRLTT (66 aa)). Residues 256 to 260 (IHIVD) carry the VHIID motif. Residues 310 to 343 (EIGNRMEKFARLMGVPFKFNIIHHVGDLSEFDLN) form a leucine repeat II (LRII) region. The PFYRE stretch occupies residues 353–449 (LAINCVGAMH…ERAAGRAIVD (97 aa)). Residues 452–529 (ACEPSDSTER…QPVVWASAWR (78 aa)) form an SAW region.

The protein belongs to the GRAS family. As to quaternary structure, interacts with SCR, SCL23, JKD and MGP. Interacts with SIEL. Association to endosomes and intercellular movement of SHR rely on the interaction with SIEL. Expressed in the stele and the quiescent center. Not detected in the ground tissue cell lineage. The SHR protein moves from the stele to a single layer of adjacent cells, where it enters the nucleus.

It is found in the cytoplasm. It localises to the nucleus. The protein localises to the early endosome. Its subcellular location is the late endosome. The protein resides in the recycling endosome. Transcription factor required for quiescent center cells specification and maintenance of surrounding stem cells, and for the asymmetric cell division involved in radial pattern formation in roots. Essential for both cell division and cell specification. Regulates the radial organization of the shoot axial organs and is required for normal shoot gravitropism. Directly controls the transcription of SCR, and when associated with SCR, of MGP, RLK, TRI, NUC and SCL3. In Arabidopsis thaliana (Mouse-ear cress), this protein is Protein SHORT-ROOT.